Consider the following 294-residue polypeptide: 4-hydroxy-tetrahydrodipicolinate synthase (294 aa).

Threonine 45 lines the pyruvate pocket. The Proton donor/acceptor role is filled by tyrosine 133. The active-site Schiff-base intermediate with substrate is the lysine 161. Isoleucine 203 serves as a coordination point for pyruvate.

This sequence belongs to the DapA family. As to quaternary structure, homotetramer; dimer of dimers.

The protein resides in the cytoplasm. The catalysed reaction is L-aspartate 4-semialdehyde + pyruvate = (2S,4S)-4-hydroxy-2,3,4,5-tetrahydrodipicolinate + H2O + H(+). Its pathway is amino-acid biosynthesis; L-lysine biosynthesis via DAP pathway; (S)-tetrahydrodipicolinate from L-aspartate: step 3/4. Its function is as follows. Catalyzes the condensation of (S)-aspartate-beta-semialdehyde [(S)-ASA] and pyruvate to 4-hydroxy-tetrahydrodipicolinate (HTPA). The protein is 4-hydroxy-tetrahydrodipicolinate synthase of Buchnera aphidicola subsp. Baizongia pistaciae (strain Bp).